Consider the following 198-residue polypeptide: Recombination protein RecR (198 aa).

The C4-type zinc-finger motif lies at 57–72 (CSICGHITDQDPCYIC). In terms of domain architecture, Toprim spans 80 to 175 (SVICVVQDPK…KLSRIAHGLP (96 aa)).

Belongs to the RecR family.

Functionally, may play a role in DNA repair. It seems to be involved in an RecBC-independent recombinational process of DNA repair. It may act with RecF and RecO. The sequence is that of Recombination protein RecR from Bacillus velezensis (strain DSM 23117 / BGSC 10A6 / LMG 26770 / FZB42) (Bacillus amyloliquefaciens subsp. plantarum).